A 398-amino-acid chain; its full sequence is Chalcone synthase (398 aa).

C169 is an active-site residue.

Belongs to the thiolase-like superfamily. Chalcone/stilbene synthases family.

The enzyme catalyses (E)-4-coumaroyl-CoA + 3 malonyl-CoA + 3 H(+) = 2',4,4',6'-tetrahydroxychalcone + 3 CO2 + 4 CoA. Its pathway is secondary metabolite biosynthesis; flavonoid biosynthesis. In terms of biological role, the primary product of this enzyme is 4,2',4',6'-tetrahydroxychalcone (also termed naringenin-chalcone or chalcone) which can under specific conditions spontaneously isomerize into naringenin. The chain is Chalcone synthase (CHS) from Petroselinum crispum (Parsley).